The chain runs to 165 residues: Glycine cleavage system H protein, mitochondrial (165 aa).

The N-terminal 34 residues, 1–34, are a transit peptide targeting the mitochondrion; that stretch reads MALRMWASSTANALKLSSSSRLHLSPTFSISRCF. The 83-residue stretch at 56-138 folds into the Lipoyl-binding domain; sequence VATIGITDHA…YEDGWMIKIK (83 aa). Lys-97 is modified (N6-lipoyllysine).

Belongs to the GcvH family. The glycine cleavage system is composed of four proteins: P, T, L and H. (R)-lipoate serves as cofactor.

Its subcellular location is the mitochondrion. Its function is as follows. The glycine cleavage system catalyzes the degradation of glycine. The H protein shuttles the methylamine group of glycine from the P protein to the T protein. The chain is Glycine cleavage system H protein, mitochondrial (GDCSH) from Pisum sativum (Garden pea).